A 278-amino-acid polypeptide reads, in one-letter code: Glutamate racemase (278 aa).

Substrate is bound by residues 25-26 and 57-58; these read DS and YG. C89 functions as the Proton donor/acceptor in the catalytic mechanism. 90–91 is a binding site for substrate; sequence NT. The active-site Proton donor/acceptor is the C204. Residue 205–206 coordinates substrate; it reads TH.

This sequence belongs to the aspartate/glutamate racemases family.

The enzyme catalyses L-glutamate = D-glutamate. It participates in cell wall biogenesis; peptidoglycan biosynthesis. Provides the (R)-glutamate required for cell wall biosynthesis. The chain is Glutamate racemase from Brucella anthropi (strain ATCC 49188 / DSM 6882 / CCUG 24695 / JCM 21032 / LMG 3331 / NBRC 15819 / NCTC 12168 / Alc 37) (Ochrobactrum anthropi).